The primary structure comprises 213 residues: MVDKTSIQEAVKTALSKAPERKFKESVDITVNLRNIDMSQPKNRIDETIHLPNGFDNVKIAVLGKGDIVTQAKEVNVDLIIGPEEIERLGGEPREARKVAGEYRFFLAETAMMPLVGRYLGVRLGPRGRMPMPVPQGMDIRPIVQRLRSSVKIRTKDKKVFHTKVGTSGMEPEQIAENIDAVLHRVESVLESGTMNIHSVYVKTTMGPAVRVI.

The protein belongs to the universal ribosomal protein uL1 family. Part of the 50S ribosomal subunit.

Binds directly to 23S rRNA. Probably involved in E site tRNA release. Its function is as follows. Protein L1 is also a translational repressor protein, it controls the translation of its operon by binding to its mRNA. This is Large ribosomal subunit protein uL1 from Methanoculleus marisnigri (strain ATCC 35101 / DSM 1498 / JR1).